A 186-amino-acid chain; its full sequence is MKLIVGLGNPGREYELTRHNIGFMAIDELAKRWNISLNEQKFKGVFGAGFVNGEKVILLKPLTYMNLSGESIRPLMDYYKIDVEDFVVLYDDLDIPVGKLRLRMKGSAGGHNGVKSTISHLGTQEFQRIRMGIDRPKNGMKVVDYVLGRFTSEEIPDVNHSIEKAADACEEWLNKPFLQIMNTFNS.

Tyrosine 14 is a binding site for tRNA. Residue histidine 19 is the Proton acceptor of the active site. The tRNA site is built by tyrosine 64, asparagine 66, and asparagine 112.

It belongs to the PTH family. As to quaternary structure, monomer.

Its subcellular location is the cytoplasm. It catalyses the reaction an N-acyl-L-alpha-aminoacyl-tRNA + H2O = an N-acyl-L-amino acid + a tRNA + H(+). Its function is as follows. Hydrolyzes ribosome-free peptidyl-tRNAs (with 1 or more amino acids incorporated), which drop off the ribosome during protein synthesis, or as a result of ribosome stalling. Functionally, catalyzes the release of premature peptidyl moieties from peptidyl-tRNA molecules trapped in stalled 50S ribosomal subunits, and thus maintains levels of free tRNAs and 50S ribosomes. This is Peptidyl-tRNA hydrolase from Bacillus cereus (strain Q1).